Consider the following 216-residue polypeptide: 3-keto-L-gulonate-6-phosphate decarboxylase UlaD (216 aa).

Substrate is bound at residue aspartate 11. The Mg(2+) site is built by glutamate 33 and aspartate 62. Substrate is bound at residue arginine 192.

It belongs to the HPS/KGPDC family. KGPDC subfamily. As to quaternary structure, homodimer. Requires Mg(2+) as cofactor.

The catalysed reaction is 3-dehydro-L-gulonate 6-phosphate + H(+) = L-xylulose 5-phosphate + CO2. It functions in the pathway cofactor degradation; L-ascorbate degradation; D-xylulose 5-phosphate from L-ascorbate: step 2/4. Functionally, catalyzes the decarboxylation of 3-keto-L-gulonate-6-P into L-xylulose-5-P. Is involved in the anaerobic L-ascorbate utilization. This is 3-keto-L-gulonate-6-phosphate decarboxylase UlaD from Escherichia coli O139:H28 (strain E24377A / ETEC).